The chain runs to 502 residues: Probable cytosol aminopeptidase (502 aa).

Residues lysine 269 and aspartate 274 each contribute to the Mn(2+) site. Residue lysine 281 is part of the active site. The Mn(2+) site is built by aspartate 292, aspartate 351, and glutamate 353. The active site involves arginine 355.

This sequence belongs to the peptidase M17 family. It depends on Mn(2+) as a cofactor.

The protein resides in the cytoplasm. It catalyses the reaction Release of an N-terminal amino acid, Xaa-|-Yaa-, in which Xaa is preferably Leu, but may be other amino acids including Pro although not Arg or Lys, and Yaa may be Pro. Amino acid amides and methyl esters are also readily hydrolyzed, but rates on arylamides are exceedingly low.. The catalysed reaction is Release of an N-terminal amino acid, preferentially leucine, but not glutamic or aspartic acids.. Functionally, presumably involved in the processing and regular turnover of intracellular proteins. Catalyzes the removal of unsubstituted N-terminal amino acids from various peptides. The chain is Probable cytosol aminopeptidase from Vibrio campbellii (strain ATCC BAA-1116).